A 94-amino-acid chain; its full sequence is Small ribosomal subunit protein uS19 (94 aa).

The protein belongs to the universal ribosomal protein uS19 family.

In terms of biological role, protein S19 forms a complex with S13 that binds strongly to the 16S ribosomal RNA. The sequence is that of Small ribosomal subunit protein uS19 from Wolbachia pipientis subsp. Culex pipiens (strain wPip).